The chain runs to 476 residues: Angiotensinogen (476 aa).

Residues Met1–Gly24 form the signal peptide. N-linked (GlcNAc...) asparagine glycans are attached at residues Asn38, Asn161, Asn295, and Asn319. A disulfide bridge links Cys42 with Cys162.

This sequence belongs to the serpin family. In terms of processing, in response to low blood pressure, the enzyme renin/REN cleaves angiotensinogen to produce angiotensin-1. Angiotensin-1 is a substrate of ACE (angiotensin converting enzyme) that removes a dipeptide to yield the physiologically active peptide angiotensin-2. Angiotensin-1 and angiotensin-2 can be further processed to generate angiotensin-3, angiotensin-4. Angiotensin 1-9 is cleaved from angiotensin-1 by ACE2 and can be further processed by ACE to produce angiotensin 1-7, angiotensin 1-5 and angiotensin 1-4. Angiotensin 1-7 has also been proposed to be cleaved from angiotensin-2 by ACE2 or from angiotensin-1 by MME (neprilysin). Post-translationally, the disulfide bond is labile. Angiotensinogen is present in the circulation in a near 40:60 ratio with the oxidized disulfide-bonded form, which preferentially interacts with receptor-bound renin.

It is found in the secreted. In terms of biological role, essential component of the renin-angiotensin system (RAS), a potent regulator of blood pressure, body fluid and electrolyte homeostasis. Functionally, acts directly on vascular smooth muscle as a potent vasoconstrictor, affects cardiac contractility and heart rate through its action on the sympathetic nervous system, and alters renal sodium and water absorption through its ability to stimulate the zona glomerulosa cells of the adrenal cortex to synthesize and secrete aldosterone. Acts by binding to angiotensin receptors AGTR1 and AGTR2. Also binds the DEAR/FBXW7-AS1 receptor. Stimulates aldosterone release. Its function is as follows. Is a ligand for the G-protein coupled receptor MAS1. Has vasodilator and antidiuretic effects. Has an antithrombotic effect that involves MAS1-mediated release of nitric oxide from platelets. In Pan troglodytes (Chimpanzee), this protein is Angiotensinogen (AGT).